We begin with the raw amino-acid sequence, 389 residues long: Galactokinase (389 aa).

Substrate is bound at residue 34–37; the sequence is EHTD. Residues serine 68 and 125 to 131 each bind ATP; that span reads GSGLSSS. Mg(2+) is bound by residues serine 131 and glutamate 163. Aspartate 175 acts as the Proton acceptor in catalysis. Tyrosine 225 contributes to the substrate binding site.

It belongs to the GHMP kinase family. GalK subfamily.

The protein localises to the cytoplasm. The catalysed reaction is alpha-D-galactose + ATP = alpha-D-galactose 1-phosphate + ADP + H(+). Its pathway is carbohydrate metabolism; galactose metabolism. In terms of biological role, catalyzes the transfer of the gamma-phosphate of ATP to D-galactose to form alpha-D-galactose-1-phosphate (Gal-1-P). The protein is Galactokinase of Clostridium beijerinckii (strain ATCC 51743 / NCIMB 8052) (Clostridium acetobutylicum).